Consider the following 112-residue polypeptide: SPbeta prophage-derived uncharacterized protein YoqB (112 aa).

The protein is SPbeta prophage-derived uncharacterized protein YoqB (yoqB) of Bacillus subtilis (strain 168).